A 204-amino-acid chain; its full sequence is ATP-dependent Clp protease proteolytic subunit 1 (204 aa).

Residue S97 is the Nucleophile of the active site. H122 is a catalytic residue.

The protein belongs to the peptidase S14 family. In terms of assembly, fourteen ClpP subunits assemble into 2 heptameric rings which stack back to back to give a disk-like structure with a central cavity, resembling the structure of eukaryotic proteasomes.

Its subcellular location is the cytoplasm. The catalysed reaction is Hydrolysis of proteins to small peptides in the presence of ATP and magnesium. alpha-casein is the usual test substrate. In the absence of ATP, only oligopeptides shorter than five residues are hydrolyzed (such as succinyl-Leu-Tyr-|-NHMec, and Leu-Tyr-Leu-|-Tyr-Trp, in which cleavage of the -Tyr-|-Leu- and -Tyr-|-Trp bonds also occurs).. Cleaves peptides in various proteins in a process that requires ATP hydrolysis. Has a chymotrypsin-like activity. Plays a major role in the degradation of misfolded proteins. The protein is ATP-dependent Clp protease proteolytic subunit 1 of Nostoc sp. (strain PCC 7120 / SAG 25.82 / UTEX 2576).